The chain runs to 252 residues: Triosephosphate isomerase (252 aa).

10 to 12 provides a ligand contact to substrate; sequence NWK. Residue H96 is the Electrophile of the active site. E168 (proton acceptor) is an active-site residue. Substrate-binding positions include G174, S214, and 235–236; that span reads GG.

The protein belongs to the triosephosphate isomerase family. Homodimer.

The protein localises to the cytoplasm. It catalyses the reaction D-glyceraldehyde 3-phosphate = dihydroxyacetone phosphate. The protein operates within carbohydrate biosynthesis; gluconeogenesis. Its pathway is carbohydrate degradation; glycolysis; D-glyceraldehyde 3-phosphate from glycerone phosphate: step 1/1. Its function is as follows. Involved in the gluconeogenesis. Catalyzes stereospecifically the conversion of dihydroxyacetone phosphate (DHAP) to D-glyceraldehyde-3-phosphate (G3P). This is Triosephosphate isomerase from Streptococcus mutans serotype c (strain ATCC 700610 / UA159).